A 451-amino-acid chain; its full sequence is MWEEINMIKIYTLGGYEEVGKNMTAVEYNGEVVIVDMGIRLDRVLIHEDVEFQKMSSKDLRKLGAIPDDRPIRNKKVVAIALSHGHLDHIGAVGKLAPHYPDVPIYGTPYTIRLAKSEIKGEEYFEVTNPLYETNYGEIVQVSENLAIEFVQITHSIPQSSIVVIHTPEGAVVYACDYKFDNNHPYGERPDYKRLKELGKEGVKVLIAESTRVAEETKTPSEAVAKMLLEDFFLYEGMEADGLIATTFASHIARLQELIEIANKMGRQAIFIGRSLAKYTGIAKQLGLIKMKGSRVLRSPNAVSKVLKEVSQARENYLLIVTGHQGEPGAILTRMANGELYDIGPRDTVVFSAGVIPNPLNVAQRYALETKLRMKGVRMIKNLHVSGHASKEDHRYLIRMLNPEYIVPAHGEFRMLTHYAELAEEEGYMIGKEVFISRNGHVVEIPGSLEG.

Residues His-84, His-86, Asp-88, His-89, His-155, and Asp-177 each contribute to the Zn(2+) site. 384 to 388 (HVSGH) is a substrate binding site. Zn(2+) is bound at residue His-410.

It belongs to the metallo-beta-lactamase superfamily. RNA-metabolizing metallo-beta-lactamase-like family. Archaeal RNase J subfamily. As to quaternary structure, homodimer. Zn(2+) serves as cofactor.

It localises to the cytoplasm. With respect to regulation, inhibited by 1,10-phenanthroline. Its function is as follows. A highly processive 5'-3' exoribonuclease; no evidence has been seen for endonuclease activity. Prefers 5'-phosphate or 5'-hydroxyl ends; 5'-triphosphate substrates are very poorly degraded, does not degrade circular RNA. Does not degrade pre-tRNA(Trp) suggesting it is inhibited by strong secondary structures. Also degrades ssNDA but not dsDNA. This is Ribonuclease J from Pyrococcus abyssi (strain GE5 / Orsay).